A 117-amino-acid chain; its full sequence is Prefoldin subunit beta (117 aa).

It belongs to the prefoldin subunit beta family. Heterohexamer of two alpha and four beta subunits.

The protein resides in the cytoplasm. In terms of biological role, molecular chaperone capable of stabilizing a range of proteins. Seems to fulfill an ATP-independent, HSP70-like function in archaeal de novo protein folding. This chain is Prefoldin subunit beta (pfdB), found in Methanosarcina acetivorans (strain ATCC 35395 / DSM 2834 / JCM 12185 / C2A).